A 170-amino-acid polypeptide reads, in one-letter code: MAKLLCTLFLAGFVFLANAYSTDPPNPPDIENVFDGIPSIFNPVNWISNIASFFNPSNWVSNIPSILNPVNWVKKIIDINNPFTYIPDFLNPFHYFPKLNPIKWIPGWIPGLGKDRCLLPKVTGPCKASLTRYYYDKDTKACVEFIYGGCRGNRNNFKQKDECEKACTDH.

Positions 1–19 (MAKLLCTLFLAGFVFLANA) are cleaved as a signal peptide. The propeptide occupies 20–113 (YSTDPPNPPD…WIPGWIPGLG (94 aa)). Positions 117–167 (CLLPKVTGPCKASLTRYYYDKDTKACVEFIYGGCRGNRNNFKQKDECEKAC) constitute a BPTI/Kunitz inhibitor domain. Cystine bridges form between C117-C167, C126-C150, and C142-C163.

It belongs to the venom Kunitz-type family. 02 (native) subfamily. Post-translationally, O-glycosylated. In terms of tissue distribution, only expressed in epidermis.

Its subcellular location is the secreted. Functionally, serine protease inhibitor with activity against plasmin (IC(50)=10.07 nM), trypsin (IC(50)=43.39 nM), chymotrypsin (IC(50)=109.25 nM) and neutrophil elastase (IC(50)=446.93 nM). The chain is Kunitz-type U1-aranetoxin-Av1a from Araneus ventricosus (Orbweaver spider).